The sequence spans 208 residues: Large ribosomal subunit protein uL3 (208 aa).

Residues 117–149 (GFQGAIKRHGQSRGPMAHGSRYHRRPGSMGPVA) form a disordered region.

It belongs to the universal ribosomal protein uL3 family. As to quaternary structure, part of the 50S ribosomal subunit. Forms a cluster with proteins L14 and L19.

In terms of biological role, one of the primary rRNA binding proteins, it binds directly near the 3'-end of the 23S rRNA, where it nucleates assembly of the 50S subunit. This chain is Large ribosomal subunit protein uL3, found in Exiguobacterium sp. (strain ATCC BAA-1283 / AT1b).